Consider the following 51-residue polypeptide: Large ribosomal subunit protein bL33 (51 aa).

Residues 1-23 (MREKIKLESSAGTGHFYTTTKNK) are disordered. Positions 10-20 (SAGTGHFYTTT) are enriched in polar residues.

The protein belongs to the bacterial ribosomal protein bL33 family.

This chain is Large ribosomal subunit protein bL33, found in Nitrosomonas eutropha (strain DSM 101675 / C91 / Nm57).